Reading from the N-terminus, the 264-residue chain is S-adenosylmethionine decarboxylase proenzyme (264 aa).

Serine 113 acts as the Schiff-base intermediate with substrate; via pyruvic acid in catalysis. Serine 113 is modified (pyruvic acid (Ser); by autocatalysis). Residue histidine 118 is the Proton acceptor; for processing activity of the active site. Catalysis depends on cysteine 141, which acts as the Proton donor; for catalytic activity.

Belongs to the prokaryotic AdoMetDC family. Type 2 subfamily. As to quaternary structure, heterooctamer of four alpha and four beta chains arranged as a tetramer of alpha/beta heterodimers. The cofactor is pyruvate. Is synthesized initially as an inactive proenzyme. Formation of the active enzyme involves a self-maturation process in which the active site pyruvoyl group is generated from an internal serine residue via an autocatalytic post-translational modification. Two non-identical subunits are generated from the proenzyme in this reaction, and the pyruvate is formed at the N-terminus of the alpha chain, which is derived from the carboxyl end of the proenzyme. The post-translation cleavage follows an unusual pathway, termed non-hydrolytic serinolysis, in which the side chain hydroxyl group of the serine supplies its oxygen atom to form the C-terminus of the beta chain, while the remainder of the serine residue undergoes an oxidative deamination to produce ammonia and the pyruvoyl group blocking the N-terminus of the alpha chain.

It carries out the reaction S-adenosyl-L-methionine + H(+) = S-adenosyl 3-(methylsulfanyl)propylamine + CO2. It functions in the pathway amine and polyamine biosynthesis; S-adenosylmethioninamine biosynthesis; S-adenosylmethioninamine from S-adenosyl-L-methionine: step 1/1. In terms of biological role, catalyzes the decarboxylation of S-adenosylmethionine to S-adenosylmethioninamine (dcAdoMet), the propylamine donor required for the synthesis of the polyamines spermine and spermidine from the diamine putrescine. The protein is S-adenosylmethionine decarboxylase proenzyme of Stenotrophomonas maltophilia (strain K279a).